The following is a 477-amino-acid chain: Tripartite motif-containing protein 72 (477 aa).

Zn(2+) is bound by residues L14, P17, P29, C31, T34, Q37, T53, P56, G86, L89, V97, E100, L105, G108, G114, and K117. Residues 16–59 (CPLCLELFRAPVTPECGHTFCQGCLTGAPKNQDQNGSTPCPTCQ) form an RING-type zinc finger. The B box-type zinc-finger motif lies at 83–124 (VPKGHCLEHLDPLSVYCEQDKELICGVCASLGKHKGHNIITA). A coiled-coil region spans residues 135–232 (LPQQQVILQE…QMDGVLKDVE (98 aa)). Positions 272 to 476 (DEFKFQVWRK…LKIFYPPAEQ (205 aa)) constitute a B30.2/SPRY domain.

This sequence belongs to the TRIM/RBCC family. In terms of assembly, homodimer. Homooligomer; disulfide-linked. Oligomerizes on the phospholipid membrane. Disulfide bond formation at Cys-244 occurs in case of membrane damage that cause the entry of the oxidized milieu of the extracellular space, resulting in homooligomerization.

Its subcellular location is the cell membrane. It is found in the sarcolemma. The protein resides in the cytoplasmic vesicle membrane. It carries out the reaction S-ubiquitinyl-[E2 ubiquitin-conjugating enzyme]-L-cysteine + [acceptor protein]-L-lysine = [E2 ubiquitin-conjugating enzyme]-L-cysteine + N(6)-ubiquitinyl-[acceptor protein]-L-lysine.. The protein operates within protein modification; protein ubiquitination. Its activity is regulated as follows. Specifically binds phosphatidylserine. The binding to phospholipids enhances ubiquitination activity. Muscle-specific E3 ubiquitin-protein ligase that plays a central role in cell membrane repair by nucleating the assembly of the repair machinery at injury sites. Acts as a sensor of oxidation: upon membrane damage, entry of extracellular oxidative environment results in disulfide bond formation and homooligomerization at the injury site. This oligomerization acts as a nucleation site for recruitment of TRIM72-containing vesicles to the injury site, leading to membrane patch formation. Probably acts upstream of the Ca(2+)-dependent membrane resealing process. Required for transport of DYSF to sites of cell injury during repair patch formation. Regulates membrane budding and exocytosis. May be involved in the regulation of the mobility of KCNB1-containing endocytic vesicles. The protein is Tripartite motif-containing protein 72 (trim72) of Xenopus tropicalis (Western clawed frog).